A 360-amino-acid chain; its full sequence is Histidinol-phosphate aminotransferase (360 aa).

K219 is modified (N6-(pyridoxal phosphate)lysine).

Belongs to the class-II pyridoxal-phosphate-dependent aminotransferase family. Histidinol-phosphate aminotransferase subfamily. Homodimer. It depends on pyridoxal 5'-phosphate as a cofactor.

It carries out the reaction L-histidinol phosphate + 2-oxoglutarate = 3-(imidazol-4-yl)-2-oxopropyl phosphate + L-glutamate. It functions in the pathway amino-acid biosynthesis; L-histidine biosynthesis; L-histidine from 5-phospho-alpha-D-ribose 1-diphosphate: step 7/9. The protein is Histidinol-phosphate aminotransferase of Jannaschia sp. (strain CCS1).